Here is a 558-residue protein sequence, read N- to C-terminus: DEAD-box ATP-dependent RNA helicase 49 (558 aa).

Positions 16 to 44 (FSELKPPLSEDIIEALDRSGFEVCTPVQA) match the Q motif motif. In terms of domain architecture, Helicase ATP-binding spans 47–226 (IPFLCSHKDV…KAGLRNAMEV (180 aa)). 60–67 (AATGSGKT) is a binding site for ATP. The DEAD box signature appears at 174–177 (DEAD). The region spanning 255–402 (QLVHLLIENK…ERKCSENASD (148 aa)) is the Helicase C-terminal domain. Residues 506–558 (KDKLQQEKRGKRKKSSKEAVDDSNKASRKRKLTGRQRQTIQTAQDEEEMNLRL) form a disordered region. Basic and acidic residues predominate over residues 521-530 (SKEAVDDSNK). Acidic residues predominate over residues 549–558 (QDEEEMNLRL).

This sequence belongs to the DEAD box helicase family. DDX55/SPB4 subfamily.

It catalyses the reaction ATP + H2O = ADP + phosphate + H(+). This Arabidopsis thaliana (Mouse-ear cress) protein is DEAD-box ATP-dependent RNA helicase 49 (RH49).